A 389-amino-acid polypeptide reads, in one-letter code: Chaperone protein DnaJ (389 aa).

The J domain maps to 6–70 (DYYEVLGLAK…QKKAAYDQYG (65 aa)). The CR-type zinc finger occupies 142 to 224 (GVEKEIKYNR…CHGTGHEKKA (83 aa)). Zn(2+)-binding residues include C155, C158, C172, C175, C198, C201, C212, and C215. 4 CXXCXGXG motif repeats span residues 155–162 (CATCGGNG), 172–179 (CHKCHGSG), 198–205 (CDVCHGTG), and 212–219 (CPTCHGTG).

It belongs to the DnaJ family. In terms of assembly, homodimer. The cofactor is Zn(2+).

It is found in the cytoplasm. Participates actively in the response to hyperosmotic and heat shock by preventing the aggregation of stress-denatured proteins and by disaggregating proteins, also in an autonomous, DnaK-independent fashion. Unfolded proteins bind initially to DnaJ; upon interaction with the DnaJ-bound protein, DnaK hydrolyzes its bound ATP, resulting in the formation of a stable complex. GrpE releases ADP from DnaK; ATP binding to DnaK triggers the release of the substrate protein, thus completing the reaction cycle. Several rounds of ATP-dependent interactions between DnaJ, DnaK and GrpE are required for fully efficient folding. Also involved, together with DnaK and GrpE, in the DNA replication of plasmids through activation of initiation proteins. The sequence is that of Chaperone protein DnaJ from Enterococcus faecalis (strain ATCC 700802 / V583).